A 178-amino-acid chain; its full sequence is MDKTDQTAIDGSALELNRTEKTVEAVLRVASMALSITGLVIMIKNSISNDFGSLSYSNLGAFMYLVGANGVCAAYSLLSALAILALPCPISKVQVRTLFLLDQVVTYVVLAAGAVSAETVYLAYYGNIPITWSSACDSYGIFCHKALISVVFTFVVSLLYMLLSLISSYRLFSRFEAP.

The Cytoplasmic portion of the chain corresponds to 1 to 22 (MDKTDQTAIDGSALELNRTEKT). A helical membrane pass occupies residues 23 to 43 (VEAVLRVASMALSITGLVIMI). At 44 to 69 (KNSISNDFGSLSYSNLGAFMYLVGAN) the chain is on the extracellular side. A helical transmembrane segment spans residues 70–90 (GVCAAYSLLSALAILALPCPI). The Cytoplasmic segment spans residues 91 to 96 (SKVQVR). Residues 97-117 (TLFLLDQVVTYVVLAAGAVSA) form a helical membrane-spanning segment. Residues 118 to 145 (ETVYLAYYGNIPITWSSACDSYGIFCHK) are Extracellular-facing. The chain crosses the membrane as a helical span at residues 146–166 (ALISVVFTFVVSLLYMLLSLI). The Cytoplasmic portion of the chain corresponds to 167-178 (SSYRLFSRFEAP).

Belongs to the Casparian strip membrane proteins (CASP) family. Homodimer and heterodimers.

It localises to the cell membrane. The sequence is that of CASP-like protein 2A2 from Arabidopsis lyrata subsp. lyrata (Lyre-leaved rock-cress).